Here is a 642-residue protein sequence, read N- to C-terminus: Threonine--tRNA ligase (642 aa).

In terms of domain architecture, TGS spans 1-65 (MSDIITVTLP…DEDVKLQIFT (65 aa)). Residues 248–541 (DHRKLGKELD…LIEHFAGAFP (294 aa)) form a catalytic region. Zn(2+) is bound by residues Cys342, His393, and His518.

It belongs to the class-II aminoacyl-tRNA synthetase family. Homodimer. Requires Zn(2+) as cofactor.

The protein resides in the cytoplasm. It catalyses the reaction tRNA(Thr) + L-threonine + ATP = L-threonyl-tRNA(Thr) + AMP + diphosphate + H(+). Catalyzes the attachment of threonine to tRNA(Thr) in a two-step reaction: L-threonine is first activated by ATP to form Thr-AMP and then transferred to the acceptor end of tRNA(Thr). Also edits incorrectly charged L-seryl-tRNA(Thr). The protein is Threonine--tRNA ligase of Myxococcus xanthus (strain DK1622).